The following is a 284-amino-acid chain: Nucleotide-binding protein VSAL_I0495 (284 aa).

8–15 contributes to the ATP binding site; the sequence is GNSGAGKS. 56–59 contributes to the GTP binding site; it reads DIRN.

Belongs to the RapZ-like family.

Functionally, displays ATPase and GTPase activities. This Aliivibrio salmonicida (strain LFI1238) (Vibrio salmonicida (strain LFI1238)) protein is Nucleotide-binding protein VSAL_I0495.